Here is a 361-residue protein sequence, read N- to C-terminus: Probable cytosolic iron-sulfur protein assembly protein 1 (361 aa).

WD repeat units lie at residues 10–49 (AHSD…NFPQ), 56–105 (THKR…TEIL), 120–160 (GHEN…EEFE), 167–206 (DHQH…DDWS), 213–265 (GHEG…SIKH), 280–319 (VHQY…SWSI), and 327–361 (HGVH…IWKP).

The protein belongs to the WD repeat CIA1 family. Interacts with NAR1.

The protein localises to the cytoplasm. It localises to the nucleus. Functionally, essential component of the cytosolic iron-sulfur (Fe/S) protein assembly machinery. Required for the maturation of extramitochondrial Fe/S proteins. In Scheffersomyces stipitis (strain ATCC 58785 / CBS 6054 / NBRC 10063 / NRRL Y-11545) (Yeast), this protein is Probable cytosolic iron-sulfur protein assembly protein 1.